The following is a 237-amino-acid chain: NAD-dependent protein deacylase (237 aa).

Residues 1–235 enclose the Deacetylase sirtuin-type domain; sequence MRVAVLSGAG…PGLLERLPAL (235 aa). 8 to 28 serves as a coordination point for NAD(+); sequence GAGISAESGVPTFRDDKNGLW. The substrate site is built by Tyr53 and Arg56. 86–89 lines the NAD(+) pocket; the sequence is QNVD. Residue His104 is the Proton acceptor of the active site. 4 residues coordinate Zn(2+): Cys112, Cys115, Cys138, and Cys140. NAD(+)-binding positions include 177–179, 203–205, and Ala221; these read GTS and NPE.

This sequence belongs to the sirtuin family. Class III subfamily. The cofactor is Zn(2+).

It is found in the cytoplasm. It catalyses the reaction N(6)-acetyl-L-lysyl-[protein] + NAD(+) + H2O = 2''-O-acetyl-ADP-D-ribose + nicotinamide + L-lysyl-[protein]. It carries out the reaction N(6)-succinyl-L-lysyl-[protein] + NAD(+) + H2O = 2''-O-succinyl-ADP-D-ribose + nicotinamide + L-lysyl-[protein]. Functionally, NAD-dependent lysine deacetylase and desuccinylase that specifically removes acetyl and succinyl groups on target proteins. Modulates the activities of several proteins which are inactive in their acylated form. The chain is NAD-dependent protein deacylase from Mycobacterium bovis (strain ATCC BAA-935 / AF2122/97).